Consider the following 424-residue polypeptide: Serine--tRNA ligase (424 aa).

231 to 233 (TAE) contacts L-serine. 262-264 (RSE) provides a ligand contact to ATP. Glu285 lines the L-serine pocket. Position 349–352 (349–352 (EISS)) interacts with ATP. Ser385 is an L-serine binding site.

This sequence belongs to the class-II aminoacyl-tRNA synthetase family. Type-1 seryl-tRNA synthetase subfamily. Homodimer. The tRNA molecule binds across the dimer.

The protein localises to the cytoplasm. The enzyme catalyses tRNA(Ser) + L-serine + ATP = L-seryl-tRNA(Ser) + AMP + diphosphate + H(+). It carries out the reaction tRNA(Sec) + L-serine + ATP = L-seryl-tRNA(Sec) + AMP + diphosphate + H(+). Its pathway is aminoacyl-tRNA biosynthesis; selenocysteinyl-tRNA(Sec) biosynthesis; L-seryl-tRNA(Sec) from L-serine and tRNA(Sec): step 1/1. Catalyzes the attachment of serine to tRNA(Ser). Is also able to aminoacylate tRNA(Sec) with serine, to form the misacylated tRNA L-seryl-tRNA(Sec), which will be further converted into selenocysteinyl-tRNA(Sec). This Bacillus cereus (strain AH187) protein is Serine--tRNA ligase.